Here is a 398-residue protein sequence, read N- to C-terminus: S-adenosylmethionine synthase 2 (398 aa).

H16 is an ATP binding site. D18 is a binding site for Mg(2+). E51 serves as a coordination point for K(+). The L-methionine site is built by E64 and Q108. The interval 108–118 (QSADIAQGVDA) is flexible loop. ATP contacts are provided by residues 176–178 (DSK), 242–243 (KF), D251, 257–258 (RK), A274, and K278. D251 is an L-methionine binding site. K282 contacts L-methionine.

It belongs to the AdoMet synthase family. Homotetramer; dimer of dimers. The cofactor is Mg(2+). K(+) serves as cofactor.

The protein localises to the cytoplasm. The enzyme catalyses L-methionine + ATP + H2O = S-adenosyl-L-methionine + phosphate + diphosphate. It participates in amino-acid biosynthesis; S-adenosyl-L-methionine biosynthesis; S-adenosyl-L-methionine from L-methionine: step 1/1. Functionally, catalyzes the formation of S-adenosylmethionine (AdoMet) from methionine and ATP. The overall synthetic reaction is composed of two sequential steps, AdoMet formation and the subsequent tripolyphosphate hydrolysis which occurs prior to release of AdoMet from the enzyme. This Rhodopseudomonas palustris (strain BisB18) protein is S-adenosylmethionine synthase 2.